We begin with the raw amino-acid sequence, 218 residues long: Superoxide dismutase [Mn] 1 (218 aa).

Residues H43, H98, D180, and H184 each coordinate Mn(2+).

The protein belongs to the iron/manganese superoxide dismutase family. Homodimer. Mn(2+) is required as a cofactor.

The catalysed reaction is 2 superoxide + 2 H(+) = H2O2 + O2. Functionally, destroys superoxide anion radicals which are normally produced within the cells and which are toxic to biological systems. This chain is Superoxide dismutase [Mn] 1 (sodA1), found in Bacillus cereus (strain ATCC 14579 / DSM 31 / CCUG 7414 / JCM 2152 / NBRC 15305 / NCIMB 9373 / NCTC 2599 / NRRL B-3711).